The primary structure comprises 376 residues: N-acetyldiaminopimelate deacetylase (376 aa).

Asp-70 is a catalytic residue. Glu-129 acts as the Proton acceptor in catalysis.

This sequence belongs to the peptidase M20A family. N-acetyldiaminopimelate deacetylase subfamily.

It carries out the reaction N-acetyl-(2S,6S)-2,6-diaminopimelate + H2O = (2S,6S)-2,6-diaminopimelate + acetate. It functions in the pathway amino-acid biosynthesis; L-lysine biosynthesis via DAP pathway; LL-2,6-diaminopimelate from (S)-tetrahydrodipicolinate (acetylase route): step 3/3. Functionally, catalyzes the conversion of N-acetyl-diaminopimelate to diaminopimelate and acetate. This is N-acetyldiaminopimelate deacetylase from Bacillus pumilus (strain SAFR-032).